Here is a 391-residue protein sequence, read N- to C-terminus: Probable sugar efflux transporter (391 aa).

The next 12 helical transmembrane spans lie at 16–36, 51–71, 82–102, 103–123, 138–158, 171–191, 210–230, 247–267, 277–297, 300–320, 338–358, and 361–381; these read VFVF…PVAL, VGLM…PLML, LLFL…AWNF, WVLL…WSIT, QALG…LPLG, FGVI…LLPP, PLLM…FTTY, ITTL…FLFG, FIAF…VFKN, WVIF…TIAL, IFSG…SIVI, and LGLG…LFWL.

Belongs to the major facilitator superfamily. SotB (TC 2.A.1.2) family.

The protein resides in the cell inner membrane. Involved in the efflux of sugars. The physiological role may be the reduction of the intracellular concentration of toxic sugars or sugar metabolites. This Helicobacter pylori (strain G27) protein is Probable sugar efflux transporter.